An 846-amino-acid polypeptide reads, in one-letter code: Translation initiation factor IF-2 (846 aa).

A disordered region spans residues 94-263 (QRSPEEIQAE…HGFQNPTGPV (170 aa)). The segment covering 96 to 135 (SPEEIQAEQKRELDERRAAENAARDKVEAEVRQRNEEQAR) has biased composition (basic and acidic residues). Low complexity-rich tracts occupy residues 136–148 (RQAA…APAP) and 158–176 (AAPV…ASED). 2 stretches are compositionally biased toward basic and acidic residues: residues 177-206 (AAAR…RGEA) and 230-239 (TTDEESDGAR). Residues 240–253 (RGRGGKSKLKKRNQ) show a composition bias toward basic residues. The tr-type G domain maps to 346–513 (SRAPVVTVMG…AVLLQAEILE (168 aa)). The segment at 355–362 (GHVDHGKT) is G1. 355–362 (GHVDHGKT) lines the GTP pocket. The segment at 380–384 (GITQH) is G2. Residues 401-404 (DTPG) form a G3 region. Residues 401–405 (DTPGH) and 455–458 (NKID) each bind GTP. The interval 455–458 (NKID) is G4. The interval 491–493 (SAK) is G5.

The protein belongs to the TRAFAC class translation factor GTPase superfamily. Classic translation factor GTPase family. IF-2 subfamily.

It localises to the cytoplasm. Functionally, one of the essential components for the initiation of protein synthesis. Protects formylmethionyl-tRNA from spontaneous hydrolysis and promotes its binding to the 30S ribosomal subunits. Also involved in the hydrolysis of GTP during the formation of the 70S ribosomal complex. The chain is Translation initiation factor IF-2 from Pseudomonas putida (strain ATCC 47054 / DSM 6125 / CFBP 8728 / NCIMB 11950 / KT2440).